The primary structure comprises 53 residues: Lantibiotic mutacin-2 (53 aa).

A propeptide spanning residues 1–26 (MNKLNSNAVVSLNEVSDSELDTILGG) is cleaved from the precursor. The beta-methyllanthionine (Thr-Cys) cross-link spans 36–41 (TVSYEC). Cross-links (lanthionine (Ser-Cys)) lie at residues 38–52 (SYECRMNSWQHVFTC) and 45–53 (SWQHVFTCC). Position 51 is a 2,3-didehydrobutyrine (T51).

In terms of processing, maturation of lantibiotics involves the enzymatic conversion of Thr, and Ser into dehydrated AA and the formation of thioether bonds with cysteine. This is followed by membrane translocation and cleavage of the modified precursor. Post-translationally, it is not established whether the 2,3-didehydrobutyrine is the E- or Z-isomer.

In terms of biological role, lanthionine-containing peptide antibiotic (lantibiotic) active on Gram-positive bacteria including M.luteus, S.aureus, Streptococcus, P.micros, P.acidilactici, C.sporogenes, C.diphtheriae, A.viscosus, G.vaginalis, P.acnes, L.monocytogenes and M.smegmatis, and Gram-negative bacteria including C.jejuni, H.pylori and N.gonorrhoeae. Transiently and partially depolarizes the transmembrane electrical potential and pH gradient of susceptible cells, inhibits the uptake of amino acids and depletes the intracellular ATP pool. The chain is Lantibiotic mutacin-2 from Streptococcus mutans.